The primary structure comprises 125 residues: Flagellar protein FliT (125 aa).

The interval 1-50 (MDNKMDLLSAYQRILSLSEQMLNLAKNEKWDELVDMEITYLKAVEVISHS) is required for homodimerization. Residues 60–98 (LQQKMTNILQIILDNENEIKKLLQKRLDELSKLIKQASQ) are fliD binding.

This sequence belongs to the FliT family. Homodimer. Interacts with FliD and FlhC.

Its subcellular location is the cytoplasm. The protein localises to the cytosol. Dual-function protein that regulates the transcription of class 2 flagellar operons and that also acts as an export chaperone for the filament-capping protein FliD. As a transcriptional regulator, acts as an anti-FlhDC factor; it directly binds FlhC, thus inhibiting the binding of the FlhC/FlhD complex to class 2 promoters, resulting in decreased expression of class 2 flagellar operons. As a chaperone, effects FliD transition to the membrane by preventing its premature polymerization, and by directing it to the export apparatus. The polypeptide is Flagellar protein FliT (Photorhabdus laumondii subsp. laumondii (strain DSM 15139 / CIP 105565 / TT01) (Photorhabdus luminescens subsp. laumondii)).